The following is a 291-amino-acid chain: Nucleotide-binding protein Athe_0320 (291 aa).

ATP is bound at residue 9 to 16 (GMSGAGKS). 60–63 (DIRG) provides a ligand contact to GTP.

Belongs to the RapZ-like family.

In terms of biological role, displays ATPase and GTPase activities. The sequence is that of Nucleotide-binding protein Athe_0320 from Caldicellulosiruptor bescii (strain ATCC BAA-1888 / DSM 6725 / KCTC 15123 / Z-1320) (Anaerocellum thermophilum).